Reading from the N-terminus, the 414-residue chain is Tyrosine--tRNA ligase (414 aa).

Y38 is a binding site for L-tyrosine. Positions 43-52 match the 'HIGH' region motif; sequence PTATSLHLGN. Residues Y165 and Q169 each contribute to the L-tyrosine site. The 'KMSKS' region motif lies at 228 to 232; it reads KFGKS. K231 provides a ligand contact to ATP. An S4 RNA-binding domain is found at 349-414; sequence FNANQIIDLG…KKYFFMIELI (66 aa).

This sequence belongs to the class-I aminoacyl-tRNA synthetase family. TyrS type 1 subfamily. As to quaternary structure, homodimer.

The protein resides in the cytoplasm. It catalyses the reaction tRNA(Tyr) + L-tyrosine + ATP = L-tyrosyl-tRNA(Tyr) + AMP + diphosphate + H(+). Functionally, catalyzes the attachment of tyrosine to tRNA(Tyr) in a two-step reaction: tyrosine is first activated by ATP to form Tyr-AMP and then transferred to the acceptor end of tRNA(Tyr). This Mesomycoplasma hyopneumoniae (strain 7448) (Mycoplasma hyopneumoniae) protein is Tyrosine--tRNA ligase.